The sequence spans 176 residues: B9 domain-containing protein 2 (176 aa).

A C2 B9-type domain is found at 2-118 (AEVHIIGQII…LSPTWRPLGT (117 aa)).

The protein belongs to the B9D family. In terms of assembly, part of the tectonic-like complex (also named B9 complex).

Its subcellular location is the cytoplasm. The protein resides in the cytoskeleton. It localises to the cilium basal body. The protein localises to the cilium axoneme. Its function is as follows. Component of the tectonic-like complex, a complex localized at the transition zone of primary cilia and acting as a barrier that prevents diffusion of transmembrane proteins between the cilia and plasma membranes. This chain is B9 domain-containing protein 2 (b9d2), found in Xenopus laevis (African clawed frog).